A 431-amino-acid polypeptide reads, in one-letter code: MDRIRIVGGRTLEGTIKISGAKNAALPLMIASLLTSETLTLENVPALADVNMLLRILGHHGVDYSVNGRRAGEEPHASRAIHLTAGTIVDIMAPYDLVSKMRASFWVIAPLLARMGEARVSLPGGCAIGTRPVDLLLMVLEKLGAKIEIEAGYVHAKAPKGLHGAEITFPKVTVGGTHTALMAASLAQGHTLLVNAAREPEIVDLANCLTKMGAKIKGAGQSTVEIEGVGRLSGASHKVLPDRIEAGTYAIAVAMAGGDVLLEGAEADLLQTALDTIEQAGARISVTNEGIRVRRNGAGLQPVDVTTAPFPGFPTDLQAQFMALMTKAKGSSTITETIFENRFMHVQELARLGAHIRLEGDAAIVEGVETLQGAPVMATDLRASVSLVIAALAAQGETMVNRVYHLDRGFEHLEEKLGRCGAIIERISGTA.

22–23 lines the phosphoenolpyruvate pocket; that stretch reads KN. Arginine 102 contacts UDP-N-acetyl-alpha-D-glucosamine. The Proton donor role is filled by cysteine 126. The residue at position 126 (cysteine 126) is a 2-(S-cysteinyl)pyruvic acid O-phosphothioketal. UDP-N-acetyl-alpha-D-glucosamine is bound by residues 131 to 135, aspartate 316, and isoleucine 338; that span reads RPVDL.

The protein belongs to the EPSP synthase family. MurA subfamily.

It is found in the cytoplasm. It catalyses the reaction phosphoenolpyruvate + UDP-N-acetyl-alpha-D-glucosamine = UDP-N-acetyl-3-O-(1-carboxyvinyl)-alpha-D-glucosamine + phosphate. The protein operates within cell wall biogenesis; peptidoglycan biosynthesis. Its function is as follows. Cell wall formation. Adds enolpyruvyl to UDP-N-acetylglucosamine. In Beijerinckia indica subsp. indica (strain ATCC 9039 / DSM 1715 / NCIMB 8712), this protein is UDP-N-acetylglucosamine 1-carboxyvinyltransferase.